Here is a 61-residue protein sequence, read N- to C-terminus: Protein A40 homolog (61 aa).

At M1 to A11 the chain is on the cytoplasmic side. Residues G12 to L32 traverse the membrane as a helical; Signal-anchor for type II membrane protein segment. The Extracellular segment spans residues K33–D61.

Belongs to the poxviridae A40 protein family.

The protein resides in the host membrane. This chain is Protein A40 homolog (A45R), found in Homo sapiens (Human).